Here is a 147-residue protein sequence, read N- to C-terminus: Hemoglobin subunit gamma-2 (147 aa).

Residues 3–147 enclose the Globin domain; that stretch reads NFTAEDKAAI…VASALGSRYH (145 aa). A Phosphothreonine modification is found at threonine 13. 3 positions are modified to phosphoserine: serine 45, serine 51, and serine 53. Lysine 60 carries the post-translational modification N6-acetyllysine. A heme b-binding site is contributed by histidine 64. Lysine 83 carries the post-translational modification N6-acetyllysine. Residue histidine 93 coordinates heme b. At cysteine 94 the chain carries S-nitrosocysteine. Serine 140 and serine 144 each carry phosphoserine.

Belongs to the globin family. As to quaternary structure, heterotetramer of two alpha chains and two gamma chains in fetal hemoglobin (Hb F). In terms of tissue distribution, red blood cells.

Its function is as follows. Gamma chains make up the fetal hemoglobin F, in combination with alpha chains. The protein is Hemoglobin subunit gamma-2 (HBG2) of Cebus albifrons (White-fronted capuchin).